Reading from the N-terminus, the 310-residue chain is M1-specific T cell receptor beta chain (310 aa).

Positions 1-21 (MSNQVLCCVVLCLLGANTVDG) are cleaved as a signal peptide. Residues 22–114 (GITQSPKYLF…TAFYLCASSI (93 aa)) are t cell receptor beta variable 19. The Ig-like V-type domain maps to 34 to 131 (EGQNVTLSCE…FGPGTRLTVT (98 aa)). Asparagine 37 carries N-linked (GlcNAc...) asparagine glycosylation. Cysteine 42 and cysteine 110 are oxidised to a cystine. Residues 46–50 (LNHDA) are CDR1. Aspartate 49 lines the a peptide antigen pocket. The interval 68-73 (SQIVND) is CDR2. A CDR3 region spans residues 110–122 (CASSIRSSYEQYF). A t cell receptor beta joining 2-7 region spans residues 117-131 (SYEQYFGPGTRLTVT). A t cell receptor beta constant 2 region spans residues 133 to 310 (DLKNVFPPKV…AMVKRKDSRG (178 aa)). The region spanning 140 to 249 (PKVAVFEPSE…WTQDRAKPVT (110 aa)) is the Ig-like C1-type domain. A disulfide bridge links cysteine 162 with cysteine 227. N-linked (GlcNAc...) asparagine glycosylation is present at asparagine 201. The tract at residues 262-276 (CGFTSESYQQGVLSA) is connecting peptide. Residues 277–299 (TILYEILLGKATLYAVLVSALVL) form a helical membrane-spanning segment. Residues 300–310 (MAMVKRKDSRG) lie on the Cytoplasmic side of the membrane.

As to quaternary structure, disulfide-linked heterodimer with TRAV27*01J42*01C*01 alpha chain. The TR primarily interacts via its CDR3-beta domain with M/matrix protein 1-derived peptide (GILGFVFTL) displayed by HLA-A*02.01 in a 'peg-notch' recognition mode. The alpha-beta TR associates with the transmembrane signaling CD3 coreceptor proteins to form the TR-CD3 (TCR). The assembly of alpha-beta TR heterodimers with CD3 occurs in the endoplasmic reticulum where a single alpha-beta TR heterodimer associates with one CD3D-CD3E heterodimer, one CD3G-CD3E heterodimer and one CD247 homodimer forming a stable octameric structure. CD3D-CD3E and CD3G-CD3E heterodimers preferentially associate with TR alpha and TR beta chains (via TM domain), respectively. The association of the CD247 homodimer is the last step of TCR assembly in the endoplasmic reticulum and is required for transport to the cell surface. Expressed in M/matrix protein 1-specific effector memory CD8-positive T cells readily detectable in the peripheral blood, secondary lymphoid organs and lung (primary site of infection) of IAV infected individuals.

Its subcellular location is the cell membrane. Functionally, the beta chain of TRAV27*01J42*01C*01/TRBV19*01J2S7*01C*02 alpha-beta T cell receptor (TR) clonotype that is specific for HLA-A*02:01-restricted M/matrix protein 1 immunodominant epitope GILGFVFTL of influenza A virus (IAV). Classified as a public TCR clonotype, it is preferentially selected in effector memory CD8-positive T cells among multiple HLA-A*02:01 carriers/individuals and confers long-lived immunity against IAV infection. Can cross-recognize sporadically emerging IAV variants by molecular mimicry, inducing immunity toward different influenza strains. Antigen recognition initiates TR-CD3 clustering on the cell surface and intracellular activation of LCK that phosphorylates the ITAM motifs of CD3G, CD3D, CD3E and CD247 enabling the recruitment of ZAP70. In turn, ZAP70 phosphorylates LAT, which recruits numerous signaling molecules to form the LAT signalosome. The LAT signalosome propagates signal branching to three major signaling pathways, the calcium, the mitogen-activated protein kinase (MAPK) kinase and the nuclear factor NF-kappa-B (NF-kB) pathways, leading to the mobilization of transcription factors that are critical for gene expression and essential for T cell differentiation into effector/memory T cells. The chain is M1-specific T cell receptor beta chain from Homo sapiens (Human).